Here is a 355-residue protein sequence, read N- to C-terminus: Glutamyl aminopeptidase (355 aa).

2 residues coordinate a divalent metal cation: His-65 and Asp-181. Glu-213 serves as the catalytic Proton acceptor. Residues Glu-214, Asp-236, and His-319 each coordinate a divalent metal cation.

Belongs to the peptidase M42 family. The cofactor is a divalent metal cation.

The catalysed reaction is Release of N-terminal glutamate (and to a lesser extent aspartate) from a peptide.. This Lactococcus lactis subsp. cremoris (strain MG1363) protein is Glutamyl aminopeptidase (pepA).